A 176-amino-acid polypeptide reads, in one-letter code: Photosystem I assembly protein Ycf4 (176 aa).

2 consecutive transmembrane segments (helical) span residues 22 to 42 (FLWA…GTAS) and 57 to 77 (VMTF…SMLF).

This sequence belongs to the Ycf4 family.

The protein resides in the plastid thylakoid membrane. Functionally, seems to be required for the assembly of the photosystem I complex. In Cuscuta obtusiflora (Peruvian dodder), this protein is Photosystem I assembly protein Ycf4.